The primary structure comprises 224 residues: Large ribosomal subunit protein uL4 (224 aa).

The disordered stretch occupies residues 52-109 (AAARQGTHSTKTRGDVSGGGRKPYRQKGTGRARQGSTRTPQFTGGGVVHGPKPRDYSQ).

It belongs to the universal ribosomal protein uL4 family. In terms of assembly, part of the 50S ribosomal subunit.

Its function is as follows. One of the primary rRNA binding proteins, this protein initially binds near the 5'-end of the 23S rRNA. It is important during the early stages of 50S assembly. It makes multiple contacts with different domains of the 23S rRNA in the assembled 50S subunit and ribosome. Forms part of the polypeptide exit tunnel. This chain is Large ribosomal subunit protein uL4, found in Mycobacterium ulcerans (strain Agy99).